A 339-amino-acid chain; its full sequence is DNA-directed RNA polymerase subunit alpha (339 aa).

Positions 1–233 are alpha N-terminal domain (alpha-NTD); it reads MVREEITGST…DLFLPFIHTE (233 aa). The segment at 266 to 339 is alpha C-terminal domain (alpha-CTD); that stretch reads GIPLNCIFID…IDLPKNKFSL (74 aa).

Belongs to the RNA polymerase alpha chain family. In plastids the minimal PEP RNA polymerase catalytic core is composed of four subunits: alpha, beta, beta', and beta''. When a (nuclear-encoded) sigma factor is associated with the core the holoenzyme is formed, which can initiate transcription.

It is found in the plastid. The protein localises to the chloroplast. The catalysed reaction is RNA(n) + a ribonucleoside 5'-triphosphate = RNA(n+1) + diphosphate. Its function is as follows. DNA-dependent RNA polymerase catalyzes the transcription of DNA into RNA using the four ribonucleoside triphosphates as substrates. The protein is DNA-directed RNA polymerase subunit alpha of Sorghum bicolor (Sorghum).